A 286-amino-acid chain; its full sequence is Ribosomal RNA small subunit methyltransferase A (286 aa).

The S-adenosyl-L-methionine site is built by asparagine 28, leucine 30, glycine 55, glutamate 77, aspartate 103, and asparagine 123.

This sequence belongs to the class I-like SAM-binding methyltransferase superfamily. rRNA adenine N(6)-methyltransferase family. RsmA subfamily.

It localises to the cytoplasm. The enzyme catalyses adenosine(1518)/adenosine(1519) in 16S rRNA + 4 S-adenosyl-L-methionine = N(6)-dimethyladenosine(1518)/N(6)-dimethyladenosine(1519) in 16S rRNA + 4 S-adenosyl-L-homocysteine + 4 H(+). Specifically dimethylates two adjacent adenosines (A1518 and A1519) in the loop of a conserved hairpin near the 3'-end of 16S rRNA in the 30S particle. May play a critical role in biogenesis of 30S subunits. The protein is Ribosomal RNA small subunit methyltransferase A of Bradyrhizobium sp. (strain BTAi1 / ATCC BAA-1182).